The following is a 152-amino-acid chain: Large ribosomal subunit protein bL9 (152 aa).

It belongs to the bacterial ribosomal protein bL9 family.

Binds to the 23S rRNA. This Nocardia farcinica (strain IFM 10152) protein is Large ribosomal subunit protein bL9.